The sequence spans 48 residues: uncharacterized protein (48 aa).

Residues 25 to 47 (TFASIGVTVGVQIVILLIWGLSW) form a helical membrane-spanning segment.

It is found in the membrane. This is an uncharacterized protein from Archaeoglobus fulgidus (strain ATCC 49558 / DSM 4304 / JCM 9628 / NBRC 100126 / VC-16).